The chain runs to 582 residues: uncharacterized protein (582 aa).

A run of 6 helical transmembrane segments spans residues 17–37 (VAML…LPTV), 57–77 (LGAV…GAVY), 131–151 (MTAT…IMAI), 156–176 (ALTW…YWII), 239–259 (ALML…LIWF), and 271–291 (VGSL…VLMA). The region spanning 17 to 300 (VAMLMMLQLV…ATMTLAVLPR (284 aa)) is the ABC transmembrane type-1 domain. The region spanning 335 to 571 (VRLAGATFTY…CPTYAEFAAS (237 aa)) is the ABC transporter domain. 369–376 (GSTGSGKS) contributes to the ATP binding site.

It belongs to the ABC transporter superfamily. MsbA family.

It is found in the cell membrane. This is an uncharacterized protein from Mycobacterium bovis (strain ATCC BAA-935 / AF2122/97).